The sequence spans 281 residues: Small ribosomal subunit protein uS2 (281 aa).

A disordered region spans residues 225–281 (LMERKAEKPEEEETEEAAPRRERRARSGARRSRQNENEATAEAATEVAEAPEAEEAE). Over residues 245 to 256 (RERRARSGARRS) the composition is skewed to basic residues. Positions 262–272 (EATAEAATEVA) are enriched in low complexity.

This sequence belongs to the universal ribosomal protein uS2 family.

This is Small ribosomal subunit protein uS2 from Porphyromonas gingivalis (strain ATCC 33277 / DSM 20709 / CIP 103683 / JCM 12257 / NCTC 11834 / 2561).